The primary structure comprises 356 residues: Cytochrome b translation regulator cbp7 (356 aa).

Component of a complex, at least composed of cbp7 and cbp8.

The protein resides in the mitochondrion. Its function is as follows. Translation factor for cob1/cytochrome b; plays a role in cob1 mRNA stabilization and required for correct folding of the protein. The polypeptide is Cytochrome b translation regulator cbp7 (Schizosaccharomyces pombe (strain 972 / ATCC 24843) (Fission yeast)).